The primary structure comprises 208 residues: Predicted GPI-anchored protein 37 (208 aa).

The first 18 residues, Met1–Ser18, serve as a signal peptide directing secretion. The tract at residues Thr33–Trp93 is disordered. Positions Leu36–Ser53 are enriched in gly residues. A compositionally biased stretch (low complexity) spans Ser54–Gly63. Asn173 is a glycosylation site (N-linked (GlcNAc...) asparagine). Ser185 carries GPI-anchor amidated serine lipidation. Residues Ser186–Leu208 constitute a propeptide, removed in mature form.

This sequence belongs to the PGA37 family.

Its subcellular location is the cell membrane. Predicted GPI-anchored protein which may have a role during host infection. This chain is Predicted GPI-anchored protein 37 (PGA37), found in Candida albicans (strain SC5314 / ATCC MYA-2876) (Yeast).